A 92-amino-acid chain; its full sequence is UPF0358 protein SH1840 (92 aa).

The protein belongs to the UPF0358 family.

The polypeptide is UPF0358 protein SH1840 (Staphylococcus haemolyticus (strain JCSC1435)).